The following is a 332-amino-acid chain: Tsukubadiene synthase (332 aa).

2 residues coordinate Mg(2+): aspartate 75 and glutamate 80. The DDXXXE motif motif lies at 75–80 (DDHLDE). Residue arginine 165 coordinates substrate. Mg(2+) is bound by residues serine 212, serine 216, and glutamate 220. The SXXXSXXXE motif motif lies at 212-220 (SDLHSFQLE). A substrate-binding site is contributed by 298–299 (RY).

Belongs to the terpene synthase family. Mg(2+) serves as cofactor.

It carries out the reaction (2E,6E,10E)-geranylgeranyl diphosphate = tsukubadiene + diphosphate. Catalyzes the formation of the 5-9-5 ring skeleton (3S,6S,11R,14S)-tsukubadiene from geranylgeranyl diphosphate (GGPP) via a 1,11-cyclization and a 10Re,14Re-cyclization. The polypeptide is Tsukubadiene synthase (Streptomyces tsukubensis (strain DSM 42081 / NBRC 108919 / NRRL 18488 / 9993)).